We begin with the raw amino-acid sequence, 43 residues long: Thaumatin-like protein 1 (43 aa).

Belongs to the thaumatin family.

This Glebionis coronaria (Crown daisy) protein is Thaumatin-like protein 1.